We begin with the raw amino-acid sequence, 230 residues long: Large ribosomal subunit protein uL3 (230 aa).

Disordered regions lie at residues 125–149 and 210–230; these read QAIG…SLGD and PNPK…VKNE.

Belongs to the universal ribosomal protein uL3 family. As to quaternary structure, part of the 50S ribosomal subunit. Forms a cluster with proteins L14 and L19.

Functionally, one of the primary rRNA binding proteins, it binds directly near the 3'-end of the 23S rRNA, where it nucleates assembly of the 50S subunit. This chain is Large ribosomal subunit protein uL3, found in Mesomycoplasma hyopneumoniae (strain 232) (Mycoplasma hyopneumoniae).